The primary structure comprises 373 residues: Chloroperoxidase (373 aa).

A signal peptide spans 1 to 20 (MFSKVLPFVGAVAALPHSVR). Pyrrolidone carboxylic acid is present on glutamine 21. A glycan (N-linked (GlcNAc...) asparagine) is linked at asparagine 33. A heme-binding site is contributed by cysteine 50. Cysteine 100 and cysteine 108 are oxidised to a cystine. Residue asparagine 114 is glycosylated (N-linked (GlcNAc...) asparagine). Mn(2+) contacts are provided by glutamate 125, histidine 126, and serine 129. Glutamate 204 is a catalytic residue. Asparagine 237 carries N-linked (GlcNAc...) asparagine glycosylation. The O-linked (Man) threonine glycan is linked to threonine 259. O-linked (Man) serine glycosylation is found at serine 260, serine 262, serine 263, and serine 269. Residue threonine 271 is glycosylated (O-linked (Man) threonine). Residue serine 272 is glycosylated (O-linked (Man) serine). O-linked (Man) threonine glycosylation is present at threonine 273. Residues threonine 296, threonine 304, and threonine 314 are each glycosylated (O-linked (Man...) threonine). A propeptide spanning residues 322 to 373 (EAAPAATTSMAVFKNPYLEAIGTQDIKNQQAYVSSKAAAMASAMAANKARNL) is cleaved from the precursor.

This sequence belongs to the chloroperoxidase family. Heme b is required as a cofactor. Mn(2+) serves as cofactor. In terms of processing, N- and O-glycosylated.

It carries out the reaction RH + Cl(-) + H2O2 = RCl + 2 H2O.. Its function is as follows. Catalyzes peroxidative halogenations involved in the biosynthesis of clardariomycin (2,2-dichloro-1,3-cyclo-pentenedione). The enzyme also has potent catalase activity and in the absence of halide ion, acts as a peroxidase similar to plant peroxidases. This Leptoxyphium fumago (Caldariomyces fumago) protein is Chloroperoxidase (CPO).